The primary structure comprises 120 residues: NAD(P)H-quinone oxidoreductase subunit 3, chloroplastic (120 aa).

The next 3 helical transmembrane spans lie at F10–L30, M64–V84, and M89–V109.

This sequence belongs to the complex I subunit 3 family. In terms of assembly, NDH is composed of at least 16 different subunits, 5 of which are encoded in the nucleus.

Its subcellular location is the plastid. The protein localises to the chloroplast thylakoid membrane. It catalyses the reaction a plastoquinone + NADH + (n+1) H(+)(in) = a plastoquinol + NAD(+) + n H(+)(out). The enzyme catalyses a plastoquinone + NADPH + (n+1) H(+)(in) = a plastoquinol + NADP(+) + n H(+)(out). NDH shuttles electrons from NAD(P)H:plastoquinone, via FMN and iron-sulfur (Fe-S) centers, to quinones in the photosynthetic chain and possibly in a chloroplast respiratory chain. The immediate electron acceptor for the enzyme in this species is believed to be plastoquinone. Couples the redox reaction to proton translocation, and thus conserves the redox energy in a proton gradient. In Chlorokybus atmophyticus (Soil alga), this protein is NAD(P)H-quinone oxidoreductase subunit 3, chloroplastic.